A 179-amino-acid chain; its full sequence is Gamma-crystallin S (179 aa).

An N-acetylserine modification is found at Ser2. The interval 2–5 (SKTG) is N-terminal arm. 2 consecutive Beta/gamma crystallin 'Greek key' domains span residues 6–44 (TKIT…RVEG) and 45–87 (GTWA…RALH). Residues 88–93 (LSSGGQ) form a connecting peptide region. 2 consecutive Beta/gamma crystallin 'Greek key' domains span residues 94-134 (YKIQ…KVLD) and 135-177 (GAWI…RRIV).

The protein belongs to the beta/gamma-crystallin family. In terms of assembly, monomer.

In terms of biological role, crystallins are the dominant structural components of the vertebrate eye lens. The protein is Gamma-crystallin S (CRYGS) of Oryctolagus cuniculus (Rabbit).